A 481-amino-acid chain; its full sequence is MTCGSGFCGRAFSCASACGPRPGRCCISAAPYRGISCYRGLSGGFGSQSVCGAFRSGSCGRSFGYRSGGICGPSPPCITTVSVNESLLTPLNLEIDPNAQCVKHEEKEQIKCLNSKFAAFIDKVRFLEQQNKLLETKWQFYQNRKCCESNMEPLFEGYIEALRREAECVEADSGRLAAELNHAQESMEGYKKRYEEEVSLRATAENEFVALKKDVDCAYLRKSDLEANAEALTQETDFLRRMYDEETRILHSHISDTSIVVKMDNSRDLNMDCVVAEIKAQYDDIASRSRAEAESWYRTKCEEIKATVIRHGETLRRTREEINELNRMIQRLTAEIENAKCQNTKLEAAVTQSEQQGEAALADARCKLAELEGALQKAKQDMACLLKEYQEVMNSKLGLDVEITTYRRLLEGEEQRLCEGVGAVNVCVSSSRGGVVCGDLCVSGSRPVIGSACSAPCSGNLAVNTGLCAPCGSAVSCGRKC.

The segment at 1–106 (MTCGSGFCGR…PNAQCVKHEE (106 aa)) is head. Positions 106–417 (EKEQIKCLNS…RLLEGEEQRL (312 aa)) constitute an IF rod domain. Positions 107–141 (KEQIKCLNSKFAAFIDKVRFLEQQNKLLETKWQFY) are coil 1A. The segment at 142–151 (QNRKCCESNM) is linker 1. The interval 152-252 (EPLFEGYIEA…YDEETRILHS (101 aa)) is coil 1B. A Glycyl lysine isopeptide (Lys-Gly) (interchain with G-Cter in SUMO1) cross-link involves residue lysine 212. A linker 12 region spans residues 253–269 (HISDTSIVVKMDNSRDL). The interval 270–413 (NMDCVVAEIK…TTYRRLLEGE (144 aa)) is coil 2. The interval 414–481 (EQRLCEGVGA…GSAVSCGRKC (68 aa)) is tail.

The protein belongs to the intermediate filament family. Heterotetramer of two type I and two type II keratins. In terms of tissue distribution, expressed in dorsal skin.

The protein is Keratin, type II cuticular Hb1 of Mus musculus (Mouse).